Consider the following 418-residue polypeptide: Probable basic-leucine zipper transcription factor E (418 aa).

The stretch at 8–47 forms a coiled coil; it reads IQQIQQLHMLLQQQQQQQQQQQQQQQQQQQQLQQQNFQLT. Low complexity-rich tracts occupy residues 51 to 71 and 95 to 134; these read FQIPVNNNNNNNNNSNNNNNN and INTTTTTTNNNNNNNNNNNNNNNNNNNNNNNNNNNNNNNT. Disordered stretches follow at residues 51–75, 95–149, 165–196, and 211–252; these read FQIPVNNNNNNNNNSNNNNNNETAF, INTT…KKQK, PTAAVKKKPPAKKSAKNAASQPTSPTLSTTNT, and KNQE…KNRR. Residues 169-179 are compositionally biased toward basic residues; that stretch reads VKKKPPAKKSA. Residues 180–196 show a composition bias toward low complexity; sequence KNAASQPTSPTLSTTNT. The segment covering 220–239 has biased composition (acidic residues); sequence DNSEESDSDEEDFENGDNEN. Positions 246–309 constitute a bZIP domain; sequence GDRKNRRLLK…QLMKDKVRYL (64 aa). Positions 248 to 268 are basic motif; sequence RKNRRLLKNREAAQLFRQRQK. Positions 274 to 281 are leucine-zipper; sequence LESKASSL. Residues 324-362 adopt a coiled-coil conformation; it reads SVVNQDNINNLNNNLNGLQNQQNNNNNNNNNNNNNNNNN. The segment at 336 to 418 is disordered; that stretch reads NNLNGLQNQQ…DSLLFNLPPD (83 aa).

It belongs to the bZIP family.

The protein resides in the nucleus. In terms of biological role, probable transcriptional regulator. The protein is Probable basic-leucine zipper transcription factor E (bzpE) of Dictyostelium discoideum (Social amoeba).